Consider the following 83-residue polypeptide: Subtilisin-chymotrypsin inhibitor CI-1A (83 aa).

The segment at 1–24 (MSSMEGSVLKYPEPTEGSIGASSA) is disordered.

Belongs to the protease inhibitor I13 (potato type I serine protease inhibitor) family.

In terms of biological role, inhibits both subtilisin and chymotrypsin. This Hordeum vulgare (Barley) protein is Subtilisin-chymotrypsin inhibitor CI-1A.